A 146-amino-acid chain; its full sequence is D-aminoacyl-tRNA deacylase (146 aa).

A Gly-cisPro motif, important for rejection of L-amino acids motif is present at residues G137–P138.

This sequence belongs to the DTD family. In terms of assembly, homodimer.

The protein localises to the cytoplasm. The enzyme catalyses glycyl-tRNA(Ala) + H2O = tRNA(Ala) + glycine + H(+). It catalyses the reaction a D-aminoacyl-tRNA + H2O = a tRNA + a D-alpha-amino acid + H(+). An aminoacyl-tRNA editing enzyme that deacylates mischarged D-aminoacyl-tRNAs. Also deacylates mischarged glycyl-tRNA(Ala), protecting cells against glycine mischarging by AlaRS. Acts via tRNA-based rather than protein-based catalysis; rejects L-amino acids rather than detecting D-amino acids in the active site. By recycling D-aminoacyl-tRNA to D-amino acids and free tRNA molecules, this enzyme counteracts the toxicity associated with the formation of D-aminoacyl-tRNA entities in vivo and helps enforce protein L-homochirality. The chain is D-aminoacyl-tRNA deacylase from Deinococcus deserti (strain DSM 17065 / CIP 109153 / LMG 22923 / VCD115).